Reading from the N-terminus, the 179-residue chain is Putative invertase inhibitor (179 aa).

An N-terminal signal peptide occupies residues 1–23; the sequence is MKLSFSLCIFFFNLLLLLQAVIS. Cystine bridges form between cysteine 31–cysteine 46 and cysteine 102–cysteine 142.

Belongs to the PMEI family. In terms of assembly, monomer. In terms of processing, not glycosylated. As to expression, expressed in pollen (at protein level). Expressed in stem, but not leaves (at protein level). Expressed in pollen.

It is found in the secreted. It localises to the cell wall. The protein localises to the endoplasmic reticulum. Its function is as follows. Invertase inhibitor. The chain is Putative invertase inhibitor from Platanus acerifolia (London plane tree).